The primary structure comprises 831 residues: Vi polysaccharide biosynthesis protein TviD (831 aa).

The protein operates within glycan metabolism; Vi-antigen biosynthesis. Its pathway is capsule biogenesis; capsule polysaccharide biosynthesis. May be required for maturation of the Vi polysaccharide. The polypeptide is Vi polysaccharide biosynthesis protein TviD (tviD) (Salmonella typhi).